A 123-amino-acid chain; its full sequence is Small ribosomal subunit protein uS12 (123 aa).

Residue Asp89 is modified to 3-methylthioaspartic acid.

This sequence belongs to the universal ribosomal protein uS12 family. As to quaternary structure, part of the 30S ribosomal subunit. Contacts proteins S8 and S17. May interact with IF1 in the 30S initiation complex.

Its function is as follows. With S4 and S5 plays an important role in translational accuracy. In terms of biological role, interacts with and stabilizes bases of the 16S rRNA that are involved in tRNA selection in the A site and with the mRNA backbone. Located at the interface of the 30S and 50S subunits, it traverses the body of the 30S subunit contacting proteins on the other side and probably holding the rRNA structure together. The combined cluster of proteins S8, S12 and S17 appears to hold together the shoulder and platform of the 30S subunit. This chain is Small ribosomal subunit protein uS12, found in Pelagibacter ubique (strain HTCC1062).